We begin with the raw amino-acid sequence, 241 residues long: Agamous-like MADS-box protein AGL8 homolog (241 aa).

One can recognise an MADS-box domain in the interval 3 to 57; the sequence is RGRVQLKRIENKINRQVTFSKRRSGLLKKAHEISVLCDAEVALVIFSSKGKLFEY. One can recognise a K-box domain in the interval 88-178; sequence SENWVLEHAK…LKKIKEREKN (91 aa).

Its subcellular location is the nucleus. Its function is as follows. Probable transcription factor. This is Agamous-like MADS-box protein AGL8 homolog (AGL8) from Sinapis alba (White mustard).